The following is a 248-amino-acid chain: 2,3-bisphosphoglycerate-dependent phosphoglycerate mutase (248 aa).

Residues 8 to 15 (RHGESEWN), 21 to 22 (TG), R60, 87 to 90 (ERHY), K98, 114 to 115 (RR), and 183 to 184 (GN) each bind substrate. H9 acts as the Tele-phosphohistidine intermediate in catalysis. The active-site Proton donor/acceptor is E87.

This sequence belongs to the phosphoglycerate mutase family. BPG-dependent PGAM subfamily.

The catalysed reaction is (2R)-2-phosphoglycerate = (2R)-3-phosphoglycerate. The protein operates within carbohydrate degradation; glycolysis; pyruvate from D-glyceraldehyde 3-phosphate: step 3/5. Functionally, catalyzes the interconversion of 2-phosphoglycerate and 3-phosphoglycerate. In Borrelia hermsii (strain HS1 / DAH), this protein is 2,3-bisphosphoglycerate-dependent phosphoglycerate mutase.